A 193-amino-acid chain; its full sequence is Mediator of RNA polymerase II transcription subunit 30 (193 aa).

The interval Met-1 to Gln-20 is disordered. An N-acetylserine modification is found at Ser-2. The span at Gly-10–Gln-20 shows a compositional bias: low complexity. Residues Tyr-71–Arg-93 adopt a coiled-coil conformation.

This sequence belongs to the Mediator complex subunit 30 family. In terms of assembly, component of the Mediator complex, which is composed of MED1, MED4, MED6, MED7, MED8, MED9, MED10, MED11, MED12, MED13, MED13L, MED14, MED15, MED16, MED17, MED18, MED19, MED20, MED21, MED22, MED23, MED24, MED25, MED26, MED27, MED29, MED30, MED31, CCNC, CDK8 and CDC2L6/CDK11. The MED12, MED13, CCNC and CDK8 subunits form a distinct module termed the CDK8 module. Mediator containing the CDK8 module is less active than Mediator lacking this module in supporting transcriptional activation. Individual preparations of the Mediator complex lacking one or more distinct subunits have been variously termed ARC, CRSP, DRIP, PC2, SMCC and TRAP.

The protein resides in the nucleus. Its function is as follows. Component of the Mediator complex, a coactivator involved in the regulated transcription of nearly all RNA polymerase II-dependent genes. Mediator functions as a bridge to convey information from gene-specific regulatory proteins to the basal RNA polymerase II transcription machinery. Mediator is recruited to promoters by direct interactions with regulatory proteins and serves as a scaffold for the assembly of a functional preinitiation complex with RNA polymerase II and the general transcription factors. The sequence is that of Mediator of RNA polymerase II transcription subunit 30 (MED30) from Bos taurus (Bovine).